The primary structure comprises 254 residues: Isoprenyl transferase (254 aa).

The active site involves Asp-24. Asp-24 contributes to the Mg(2+) binding site. Substrate contacts are provided by residues 25 to 28 (GNGR), Trp-29, Arg-37, His-41, and 69 to 71 (SSE). The active-site Proton acceptor is the Asn-72. Residues Trp-73, Arg-75, Arg-192, and 198–200 (RIS) contribute to the substrate site. Glu-211 provides a ligand contact to Mg(2+).

This sequence belongs to the UPP synthase family. In terms of assembly, homodimer. The cofactor is Mg(2+).

Functionally, catalyzes the condensation of isopentenyl diphosphate (IPP) with allylic pyrophosphates generating different type of terpenoids. This is Isoprenyl transferase from Bordetella parapertussis (strain 12822 / ATCC BAA-587 / NCTC 13253).